Reading from the N-terminus, the 332-residue chain is Phospho-N-acetylmuramoyl-pentapeptide-transferase (332 aa).

The next 10 membrane-spanning stretches (helical) occupy residues 3-23 (FALMSGLVAFLATVLLIPRFI), 52-72 (MGGTVFLVVAILVSLLFATAF), 74-94 (LLTGGVLAILFILALYGVVGF), 115-135 (LALQILGGIVFYFVHVRGAGG), 140-160 (VFGHMVHLGVLYFPFVLFWLV), 172-192 (IDGLASISVVISLLAYSVIAF), 197-217 (FDILLVCVTMIGGLLGFFVYN), 223-243 (IFMGDVGSLALGGMLATISIA), 248-268 (WTLLLIGLVYVIETSSVMLQV), and 311-331 (VDFFLWSVGLIMSLITLAILY).

It belongs to the glycosyltransferase 4 family. MraY subfamily. Mg(2+) is required as a cofactor.

The protein localises to the cell membrane. The enzyme catalyses UDP-N-acetyl-alpha-D-muramoyl-L-alanyl-gamma-D-glutamyl-L-lysyl-D-alanyl-D-alanine + di-trans,octa-cis-undecaprenyl phosphate = Mur2Ac(oyl-L-Ala-gamma-D-Glu-L-Lys-D-Ala-D-Ala)-di-trans,octa-cis-undecaprenyl diphosphate + UMP. It functions in the pathway cell wall biogenesis; peptidoglycan biosynthesis. Functionally, catalyzes the initial step of the lipid cycle reactions in the biosynthesis of the cell wall peptidoglycan: transfers peptidoglycan precursor phospho-MurNAc-pentapeptide from UDP-MurNAc-pentapeptide onto the lipid carrier undecaprenyl phosphate, yielding undecaprenyl-pyrophosphoryl-MurNAc-pentapeptide, known as lipid I. In Streptococcus suis (strain 98HAH33), this protein is Phospho-N-acetylmuramoyl-pentapeptide-transferase.